Here is a 244-residue protein sequence, read N- to C-terminus: Phosphoadenosine 5'-phosphosulfate reductase (244 aa).

Cysteine 239 (nucleophile; cysteine thiosulfonate intermediate) is an active-site residue.

It belongs to the PAPS reductase family. CysH subfamily.

Its subcellular location is the cytoplasm. The enzyme catalyses [thioredoxin]-disulfide + sulfite + adenosine 3',5'-bisphosphate + 2 H(+) = [thioredoxin]-dithiol + 3'-phosphoadenylyl sulfate. The protein operates within sulfur metabolism; hydrogen sulfide biosynthesis; sulfite from sulfate: step 3/3. In terms of biological role, catalyzes the formation of sulfite from phosphoadenosine 5'-phosphosulfate (PAPS) using thioredoxin as an electron donor. The sequence is that of Phosphoadenosine 5'-phosphosulfate reductase from Zymomonas mobilis subsp. mobilis (strain ATCC 31821 / ZM4 / CP4).